The following is a 255-amino-acid chain: 7alpha-hydroxysteroid dehydrogenase (255 aa).

NAD(+) is bound by residues Ile-23, 42-43 (DI), 68-69 (DI), and Asn-95. Positions 99, 146, 151, and 159 each coordinate glycochenodeoxycholate. NAD(+) is bound by residues Tyr-159, Lys-163, and 192-194 (ILT). The active-site Proton acceptor is the Tyr-159.

It belongs to the short-chain dehydrogenases/reductases (SDR) family. Homotetramer.

It carries out the reaction cholate + NAD(+) = 3alpha,12alpha-dihydroxy-7-oxo-5beta-cholanate + NADH + H(+). The catalysed reaction is chenodeoxycholate + NAD(+) = 7-oxolithocholate + NADH + H(+). The enzyme catalyses taurochenodeoxycholate + NAD(+) = 7-oxotaurolithocholate + NADH + H(+). It catalyses the reaction taurocholate + NAD(+) = 7-oxo-taurodeoxycholate + NADH + H(+). It carries out the reaction glycocholate + NAD(+) = 7-oxo-glycodeoxycholate + NADH + H(+). The catalysed reaction is glycochenodeoxycholate + NAD(+) = 7-oxoglycolithocholate + NADH + H(+). Functionally, 7alpha-hydroxysteroid dehydrogenase involved in the metabolism of bile acids. Catalyzes the NAD(+)-dependent oxidation of the 7alpha-hydroxy group of 7alpha-hydroxysteroids, such as the major human bile acids cholate and chenodeoxycholate, to the corresponding 7-oxosteroids. To a lesser extent, can also act on taurochenodeoxycholate, taurocholate and glycocholate. Can also use glycochenodeoxycholate as substrate. Is not able to use NADP(+) instead of NAD(+) as the electron acceptor. This Escherichia coli O157:H7 protein is 7alpha-hydroxysteroid dehydrogenase (hdhA).